The chain runs to 41 residues: uncharacterized protein (41 aa).

Residues 8–28 (IKKIAMFFLGILVGVFIVLFF) traverse the membrane as a helical segment.

The protein resides in the membrane. This is an uncharacterized protein from Streptococcus pneumoniae serotype 2 (strain D39 / NCTC 7466).